A 559-amino-acid polypeptide reads, in one-letter code: Formate--tetrahydrofolate ligase (559 aa).

68 to 75 (TPAGEGKT) contacts ATP.

Belongs to the formate--tetrahydrofolate ligase family.

It catalyses the reaction (6S)-5,6,7,8-tetrahydrofolate + formate + ATP = (6R)-10-formyltetrahydrofolate + ADP + phosphate. The protein operates within one-carbon metabolism; tetrahydrofolate interconversion. This chain is Formate--tetrahydrofolate ligase, found in Rhizobium johnstonii (strain DSM 114642 / LMG 32736 / 3841) (Rhizobium leguminosarum bv. viciae).